The sequence spans 158 residues: Snaclec mucetin subunit alpha (158 aa).

Positions 1 to 23 (MGRFTFVSFGLLVVFLSLSGTGA) are cleaved as a signal peptide. Cystine bridges form between C27–C38, C55–C152, and C127–C144. Residues 34–153 (YDRYCYQAFS…CGRENPFVCK (120 aa)) enclose the C-type lectin domain.

The protein belongs to the snaclec family. Dimer and tetramer of heterodimers of alpha and beta subunits ((alphabeta)(2) and (alphabeta)(4)); disulfide-linked. These two multimeric forms are found. Post-translationally, the complex is glycosylated. Expressed by the venom gland.

It is found in the secreted. Potent platelet activator that acts via GPIb (GP1BA/GP1BB). After activation by the toxin, the receptor is redistributed on platelet surface thanks to cytoskeletal translocation. The indirect activation of integrin alpha-IIb/beta-3 (ITGA2B/ITGB3) also induced by the toxin is downstream the cytoskeletal translocation of GPIb. The polypeptide is Snaclec mucetin subunit alpha (Protobothrops mucrosquamatus (Taiwan habu)).